The chain runs to 81 residues: Gamma-conotoxin-like TxMEKL-0511 (81 aa).

An N-terminal signal peptide occupies residues 1-19 (MEKLTILLLVAAVLLSIQA). Residues 20-45 (LNQEKHQRAKINLLSKRKPPAERWWR) constitute a propeptide that is removed on maturation. 3 cysteine pairs are disulfide-bonded: Cys-49/Cys-63, Cys-56/Cys-67, and Cys-62/Cys-72.

This sequence belongs to the conotoxin O2 superfamily. Expressed by the venom duct.

Its subcellular location is the secreted. In terms of biological role, gamma-conotoxins may act on voltage-gated non-specific cation pacemaker channels (HCN). In Conus textile (Cloth-of-gold cone), this protein is Gamma-conotoxin-like TxMEKL-0511.